Here is a 271-residue protein sequence, read N- to C-terminus: Mannosyl-3-phosphoglycerate phosphatase (271 aa).

Asp-13 serves as the catalytic Nucleophile. Mg(2+)-binding residues include Asp-13, Asp-15, and Asp-214.

It belongs to the HAD-like hydrolase superfamily. MPGP family. Requires Mg(2+) as cofactor.

Its subcellular location is the cytoplasm. The catalysed reaction is 2-O-(alpha-D-mannosyl)-3-phosphoglycerate + H2O = (2R)-2-O-(alpha-D-mannosyl)-glycerate + phosphate. The protein is Mannosyl-3-phosphoglycerate phosphatase of Escherichia coli O81 (strain ED1a).